Consider the following 219-residue polypeptide: Thiopurine S-methyltransferase (219 aa).

Trp-10, Leu-45, Glu-66, and Arg-123 together coordinate S-adenosyl-L-methionine.

This sequence belongs to the class I-like SAM-binding methyltransferase superfamily. TPMT family.

Its subcellular location is the cytoplasm. It carries out the reaction S-adenosyl-L-methionine + a thiopurine = S-adenosyl-L-homocysteine + a thiopurine S-methylether.. This is Thiopurine S-methyltransferase from Shewanella pealeana (strain ATCC 700345 / ANG-SQ1).